We begin with the raw amino-acid sequence, 184 residues long: NADH-quinone oxidoreductase subunit B (184 aa).

[4Fe-4S] cluster-binding residues include Cys-37, Cys-38, Cys-103, and Cys-132.

The protein belongs to the complex I 20 kDa subunit family. As to quaternary structure, NDH-1 is composed of 14 different subunits. Subunits NuoB, C, D, E, F, and G constitute the peripheral sector of the complex. The cofactor is [4Fe-4S] cluster.

The protein resides in the cell membrane. It catalyses the reaction a quinone + NADH + 5 H(+)(in) = a quinol + NAD(+) + 4 H(+)(out). Functionally, NDH-1 shuttles electrons from NADH, via FMN and iron-sulfur (Fe-S) centers, to quinones in the respiratory chain. The immediate electron acceptor for the enzyme in this species is believed to be a menaquinone. Couples the redox reaction to proton translocation (for every two electrons transferred, four hydrogen ions are translocated across the cytoplasmic membrane), and thus conserves the redox energy in a proton gradient. This chain is NADH-quinone oxidoreductase subunit B, found in Mycolicibacterium smegmatis (strain ATCC 700084 / mc(2)155) (Mycobacterium smegmatis).